Reading from the N-terminus, the 59-residue chain is UPF0337 protein PP_4561 (59 aa).

The segment covering 27–43 has biased composition (basic and acidic residues); it reads TDNEKLRAEGKAQELKG. Residues 27 to 59 form a disordered region; that stretch reads TDNEKLRAEGKAQELKGEAQQVKGNVKDAVKKP.

Belongs to the UPF0337 (CsbD) family.

In Pseudomonas putida (strain ATCC 47054 / DSM 6125 / CFBP 8728 / NCIMB 11950 / KT2440), this protein is UPF0337 protein PP_4561.